We begin with the raw amino-acid sequence, 445 residues long: MTRDKKYYICSNCANISNKWSGQCFDCGVWGSIVEEIINTNKSIIKGSKQTFDKLSCNVSEQLRIPTPICELNRVLGGGLVLGSAILIGGEPGIGKSTLLLQLTASNFESEMRCLYITGEESLDQIKLRAIRLNITNYNTAILAATNLEDIIASIDDNNNNIDLVVIDSIQTITTKELSSPPGTVSQIRTCANELVNYSKQNNIIILLSCHVTKDGQIAGPKILEHLVDTVLYFEGDHNNHFRILRSYKNRFGGVGEIGVFEMSNSGIIEVTNHSELFLIKREHNVVGTSIFAGIEGSRPLLMEVQALIVPSNMVTPRRSAVGWDANRLSMILAVLSSRIGLNLANYEIYLSIAGGLKIADPASDLAVAASLISAATSIPLPEHSVFFGEISLSGEIRKTAKAETRIKEAVKLGFNKVICSKLENLTYDFIFPCAHLQELKEIIK.

A C4-type zinc finger spans residues Cys10–Cys27. Residue Gly90–Ser97 participates in ATP binding. A RadA KNRFG motif motif is present at residues Lys249–Gly253. The interval Glu348–Lys445 is lon-protease-like.

Belongs to the RecA family. RadA subfamily.

DNA-dependent ATPase involved in processing of recombination intermediates, plays a role in repairing DNA breaks. Stimulates the branch migration of RecA-mediated strand transfer reactions, allowing the 3' invading strand to extend heteroduplex DNA faster. Binds ssDNA in the presence of ADP but not other nucleotides, has ATPase activity that is stimulated by ssDNA and various branched DNA structures, but inhibited by SSB. Does not have RecA's homology-searching function. The protein is DNA repair protein RadA of Rickettsia prowazekii (strain Madrid E).